Consider the following 544-residue polypeptide: Transcription factor bHLH119 (544 aa).

Disordered regions lie at residues Asn-12–Arg-59 and Val-185–Val-208. Residues Val-15 to Pro-29 are compositionally biased toward polar residues. Pro residues predominate over residues Leu-50–Arg-59. Residue Thr-269 is modified to Phosphothreonine. Position 274 is a phosphoserine (Ser-274). 2 disordered regions span residues Gln-342–Leu-364 and Gln-522–Lys-544. Positions Arg-357–Leu-406 constitute a bHLH domain. The span at Gln-522–Pro-535 shows a compositional bias: low complexity. 2 positions are modified to phosphoserine: Ser-541 and Ser-543.

Homodimer.

Its subcellular location is the nucleus. This chain is Transcription factor bHLH119 (BHLH119), found in Arabidopsis thaliana (Mouse-ear cress).